The following is a 929-amino-acid chain: Isoleucine--tRNA ligase (929 aa).

Residues 58–68 (PYANGDIHIGH) carry the 'HIGH' region motif. Glu563 is an L-isoleucyl-5'-AMP binding site. A 'KMSKS' region motif is present at residues 605–609 (KMSKS). Lys608 contributes to the ATP binding site. Zn(2+) is bound by residues Cys892, Cys895, Cys912, and Cys915.

It belongs to the class-I aminoacyl-tRNA synthetase family. IleS type 1 subfamily. In terms of assembly, monomer. Zn(2+) serves as cofactor.

Its subcellular location is the cytoplasm. The catalysed reaction is tRNA(Ile) + L-isoleucine + ATP = L-isoleucyl-tRNA(Ile) + AMP + diphosphate. Its function is as follows. Catalyzes the attachment of isoleucine to tRNA(Ile). As IleRS can inadvertently accommodate and process structurally similar amino acids such as valine, to avoid such errors it has two additional distinct tRNA(Ile)-dependent editing activities. One activity is designated as 'pretransfer' editing and involves the hydrolysis of activated Val-AMP. The other activity is designated 'posttransfer' editing and involves deacylation of mischarged Val-tRNA(Ile). This chain is Isoleucine--tRNA ligase, found in Neisseria gonorrhoeae (strain NCCP11945).